Reading from the N-terminus, the 248-residue chain is UDP-N-acetyl-D-mannosaminuronic acid transferase (248 aa).

It belongs to the glycosyltransferase 26 family.

The enzyme catalyses UDP-N-acetyl-alpha-D-mannosaminouronate + N-acetyl-alpha-D-glucosaminyl-di-trans,octa-cis-undecaprenyl diphosphate = beta-D-ManNAcA-(1-&gt;4)-alpha-D-GlcNAc-di-trans,octa-cis-undecaprenyl diphosphate + UDP + H(+). It functions in the pathway bacterial outer membrane biogenesis; enterobacterial common antigen biosynthesis. In terms of biological role, catalyzes the synthesis of Und-PP-GlcNAc-ManNAcA (Lipid II), the second lipid-linked intermediate involved in enterobacterial common antigen (ECA) synthesis. The polypeptide is UDP-N-acetyl-D-mannosaminuronic acid transferase (Klebsiella pneumoniae subsp. pneumoniae (strain ATCC 700721 / MGH 78578)).